The following is a 229-amino-acid chain: Peptidase E (229 aa).

Active-site charge relay system residues include S120, D135, and H157.

It belongs to the peptidase S51 family.

The protein resides in the cytoplasm. The catalysed reaction is Dipeptidase E catalyzes the hydrolysis of dipeptides Asp-|-Xaa. It does not act on peptides with N-terminal Glu, Asn or Gln, nor does it cleave isoaspartyl peptides.. Functionally, hydrolyzes dipeptides containing N-terminal aspartate residues. May play a role in allowing the cell to use peptide aspartate to spare carbon otherwise required for the synthesis of the aspartate family of amino acids. The polypeptide is Peptidase E (Shigella boydii serotype 18 (strain CDC 3083-94 / BS512)).